A 345-amino-acid polypeptide reads, in one-letter code: Phenylalanine--tRNA ligase alpha subunit (345 aa).

Position 259 (Glu-259) interacts with Mg(2+).

This sequence belongs to the class-II aminoacyl-tRNA synthetase family. Phe-tRNA synthetase alpha subunit type 1 subfamily. In terms of assembly, tetramer of two alpha and two beta subunits. It depends on Mg(2+) as a cofactor.

It localises to the cytoplasm. It carries out the reaction tRNA(Phe) + L-phenylalanine + ATP = L-phenylalanyl-tRNA(Phe) + AMP + diphosphate + H(+). The sequence is that of Phenylalanine--tRNA ligase alpha subunit from Lactococcus lactis subsp. cremoris (strain SK11).